The primary structure comprises 625 residues: ATP-binding cassette sub-family F member 2 (625 aa).

The tract at residues 1 to 54 is disordered; it reads MPSDLAKKKAAKKKEAAKARQRPRKGHEENGDAITEPQVAEERNEEANGRETTE. A compositionally biased stretch (basic and acidic residues) spans 40-54; sequence AEERNEEANGRETTE. ABC transporter domains follow at residues 88–327 and 398–615; these read AHII…ENQM and IMVQ…VGEE. 120-127 serves as a coordination point for ATP; it reads GLNGIGKS. A Phosphothreonine modification is found at Thr-220. Lys-306 carries the N6-acetyllysine modification. 432–439 contacts ATP; sequence GPNGAGKS. A Phosphoserine modification is found at Ser-514.

Belongs to the ABC transporter superfamily. ABCF family. EF3 subfamily.

This chain is ATP-binding cassette sub-family F member 2 (ABCF2), found in Bos taurus (Bovine).